A 609-amino-acid polypeptide reads, in one-letter code: MTDDNKGTKFDPKEGCSQWCILEAECSDNSLDGDLEKLFEEGTDTEISDLIDDEDIIQGNSRELLCQQESEESEQQIQLLKRKYLSSQEVLQLSPRLQSITISPQHKSKRRLFERDSGLELSFNEAEDLTQQTLEVQEVSATGSVPAEQGVKGLGIVKDLLKCSNVKAMLLAKFKEAFGVGYMDLTRQYKSSKTCCRDWVVTLYAVQDELIESSKQLLLQHCAYIWLQHMSPMCLYLLCFNVGKSRETVSRLLMNILQVAEVQMLAEPPKLRSMLSALFWYKGSMNPNVYAHGEYPEWILTQTMINHQTAQATQFDLSTMIQFAYDNEYLQEDEIAYHYAKLADTDANARAFLQHNSQARFVKECAIMVRHYKRGEMKEMSISTWVHRKLLVVEGDGHWSDIVKFIRYQDINFIRFLDIFKSFLHNKPKKNCILIHGPPDTGKSMFTMSLIKVLKGKVLSFANCRSNFWLQPLADTKLALIDDVTFVCWDYIDQYLRNGLDGNVVCLDLKHRAPCQIKFPPLLLTSNIDVMKEDKYRYLHSRIQSFAFPNKFPFDNNNMPQFRLTDQSWKSFFERLWHQLDLSDQEEEGDDGQSQRTFQCTAREPNGHL.

The Nuclear localization signal motif lies at 81-83 (KRK). Phosphoserine; by host is present on residues Ser-87 and Ser-94. Positions 93–102 (LSPRLQSITI) match the Nuclear export signal motif. A DNA-binding region region spans residues 149–312 (QGVKGLGIVK…TMINHQTAQA (164 aa)). Residues 411–561 (INFIRFLDIF…FPFDNNNMPQ (151 aa)) form the SF3 helicase domain. An ATP-binding site is contributed by 437 to 444 (GPPDTGKS). A Glycyl lysine isopeptide (Lys-Gly) (interchain with G-Cter in SUMO) cross-link involves residue Lys-518. Residues 584–609 (DQEEEGDDGQSQRTFQCTAREPNGHL) form a disordered region.

The protein belongs to the papillomaviridae E1 protein family. In terms of assembly, can form hexamers. Interacts with E2 protein; this interaction increases E1 DNA binding specificity. Interacts with host DNA polymerase subunit POLA2. Interacts with host single stranded DNA-binding protein RPA1. Interacts with host TOP1; this interaction stimulates the enzymatic activity of TOP1. Post-translationally, phosphorylated. In terms of processing, sumoylated.

It localises to the host nucleus. It carries out the reaction Couples ATP hydrolysis with the unwinding of duplex DNA by translocating in the 3'-5' direction.. The enzyme catalyses ATP + H2O = ADP + phosphate + H(+). Functionally, ATP-dependent DNA 3'-5' helicase required for initiation of viral DNA replication. It forms a complex with the viral E2 protein. The E1-E2 complex binds to the replication origin which contains binding sites for both proteins. During the initial step, a dimer of E1 interacts with a dimer of protein E2 leading to a complex that binds the viral origin of replication with high specificity. Then, a second dimer of E1 displaces the E2 dimer in an ATP-dependent manner to form the E1 tetramer. Following this, two E1 monomers are added to each half of the site, which results in the formation of two E1 trimers on the viral ori. Subsequently, two hexamers will be created. The double hexamer acts as a bi-directional helicase machinery and unwinds the viral DNA and then recruits the host DNA polymerase to start replication. The chain is Replication protein E1 from Homo sapiens (Human).